We begin with the raw amino-acid sequence, 179 residues long: Peptide methionine sulfoxide reductase MsrA (179 aa).

C14 is an active-site residue.

It belongs to the MsrA Met sulfoxide reductase family.

The catalysed reaction is L-methionyl-[protein] + [thioredoxin]-disulfide + H2O = L-methionyl-(S)-S-oxide-[protein] + [thioredoxin]-dithiol. It catalyses the reaction [thioredoxin]-disulfide + L-methionine + H2O = L-methionine (S)-S-oxide + [thioredoxin]-dithiol. Its function is as follows. Has an important function as a repair enzyme for proteins that have been inactivated by oxidation. Catalyzes the reversible oxidation-reduction of methionine sulfoxide in proteins to methionine. In Nitrobacter winogradskyi (strain ATCC 25391 / DSM 10237 / CIP 104748 / NCIMB 11846 / Nb-255), this protein is Peptide methionine sulfoxide reductase MsrA.